Here is a 470-residue protein sequence, read N- to C-terminus: Sorting nexin-17 (470 aa).

In terms of domain architecture, PX spans 1–109 (MHFSIPETES…SFLRRAQQET (109 aa)). A 1,2-diacyl-sn-glycero-3-phospho-(1D-myo-inositol-3-phosphate) is bound by residues arginine 36, serine 38, lysine 62, and arginine 75. The Ras-associating domain maps to 115-206 (EEVSLEVLLS…YKIVLRKSYW (92 aa)). Residues 115–432 (EEVSLEVLLS…DATRESMVKL (318 aa)) form an FERM-like region. Residues 270-432 (GYLRFDACVA…DATRESMVKL (163 aa)) form a PTB-like F3 module region. Phosphoserine is present on residues serine 336, serine 407, serine 409, serine 415, serine 421, serine 437, and serine 440. The interval 400–425 (VGGTLRRSDSQQAVKSPPLLESPDAT) is disordered.

It belongs to the sorting nexin family. In terms of assembly, monomer. Interacts with APP (via cytoplasmic YXNPXY motif). Interacts with KIF1B. Interacts with the C-termini of P-selectin, PTC, LDLR, VLDLR, LRP1 and LRP8. Interacts with KRIT1 (via N-terminus). Interacts with HRAS. Interacts with ITGB1 and ITGB5 (via NPxY motif). Interacts with CCDC22 and CCDC93; the interaction associates SNX17 with the CCC complex. Interacts (via C-terminus) with VPS26C and VPS35L; the interactions are direct and associate SNX17 with the retriever complex.

It localises to the cytoplasm. Its subcellular location is the early endosome. It is found in the cytoplasmic vesicle membrane. In terms of biological role, critical regulator of endosomal recycling of numerous surface proteins, including integrins, signaling receptor and channels. Binds to NPxY sequences in the cytoplasmic tails of target cargos. Associates with retriever and CCC complexes to prevent lysosomal degradation and promote cell surface recycling of numerous cargos such as integrins ITGB1, ITGB5 and their associated alpha subunits. Also required for maintenance of normal cell surface levels of APP and LRP1. Interacts with membranes containing phosphatidylinositol 3-phosphate (PtdIns(3P)). This chain is Sorting nexin-17 (SNX17), found in Pongo abelii (Sumatran orangutan).